The following is a 183-amino-acid chain: Glutathione-regulated potassium-efflux system ancillary protein KefG (183 aa).

Belongs to the NAD(P)H dehydrogenase (quinone) family. KefG subfamily. As to quaternary structure, interacts with KefB.

Its subcellular location is the cell inner membrane. The catalysed reaction is a quinone + NADH + H(+) = a quinol + NAD(+). It carries out the reaction a quinone + NADPH + H(+) = a quinol + NADP(+). Functionally, regulatory subunit of a potassium efflux system that confers protection against electrophiles. Required for full activity of KefB. The sequence is that of Glutathione-regulated potassium-efflux system ancillary protein KefG from Pectobacterium atrosepticum (strain SCRI 1043 / ATCC BAA-672) (Erwinia carotovora subsp. atroseptica).